The primary structure comprises 381 residues: tRNA-specific 2-thiouridylase MnmA (381 aa).

Residues 9–16 (GMSGGVDS) and Met-35 each bind ATP. Positions 95-97 (NPD) are interaction with target base in tRNA. Cys-100 functions as the Nucleophile in the catalytic mechanism. A disulfide bond links Cys-100 and Cys-196. ATP is bound at residue Gly-124. The interaction with tRNA stretch occupies residues 146-148 (KDQ). Residue Cys-196 is the Cysteine persulfide intermediate of the active site. The tract at residues 308 to 309 (RY) is interaction with tRNA.

Belongs to the MnmA/TRMU family.

It is found in the cytoplasm. The enzyme catalyses S-sulfanyl-L-cysteinyl-[protein] + uridine(34) in tRNA + AH2 + ATP = 2-thiouridine(34) in tRNA + L-cysteinyl-[protein] + A + AMP + diphosphate + H(+). Functionally, catalyzes the 2-thiolation of uridine at the wobble position (U34) of tRNA, leading to the formation of s(2)U34. The sequence is that of tRNA-specific 2-thiouridylase MnmA from Paraburkholderia xenovorans (strain LB400).